The chain runs to 312 residues: Ribosomal protein L11 methyltransferase (312 aa).

Residues Thr163, Gly184, Asp206, and Asn248 each coordinate S-adenosyl-L-methionine.

Belongs to the methyltransferase superfamily. PrmA family.

Its subcellular location is the cytoplasm. It catalyses the reaction L-lysyl-[protein] + 3 S-adenosyl-L-methionine = N(6),N(6),N(6)-trimethyl-L-lysyl-[protein] + 3 S-adenosyl-L-homocysteine + 3 H(+). Methylates ribosomal protein L11. The sequence is that of Ribosomal protein L11 methyltransferase from Clostridium botulinum (strain 657 / Type Ba4).